Consider the following 858-residue polypeptide: Potassium channel KOR1 (858 aa).

The segment at 1 to 41 (MGRGIGSKRRVEDDDGENMPGRKKKEEEEEEEDDDGEEEYE) is disordered. At 1 to 102 (MGRGIGSKRR…PDNKWYRLWT (102 aa)) the chain is on the cytoplasmic side. Positions 27–41 (EEEEEEDDDGEEEYE) are enriched in acidic residues. A helical transmembrane segment spans residues 103-123 (RFILVWAVYSSFFTPLEFGFF). The Extracellular portion of the chain corresponds to 124 to 130 (RGLPRNL). Residues 131–151 (FFLDIAGQIAFLIDIVLRFFV) traverse the membrane as a helical segment. At 152–174 (AYRDPDTYRMVHNPTSIALRYCK) the chain is on the cytoplasmic side. A helical transmembrane segment spans residues 175-195 (SSFIFDLLGCFPWDAIYKACG). At 196-201 (SKEEVR) the chain is on the extracellular side. A helical; Voltage-sensor membrane pass occupies residues 202–222 (YLLWIRLTRAMKVTEFFRSME). Residues 223 to 236 (KDIRINYLFTRIVK) lie on the Cytoplasmic side of the membrane. A helical membrane pass occupies residues 237–257 (LIVVELYCTHTAACIFYYLAT). The Extracellular segment spans residues 258 to 292 (TLPESMEGYTWIGSLQLGDYSYSHFREIDLTKRYM). The segment at residues 293 to 312 (TSLYFAIVTMATVGYGDIHA) is an intramembrane region (pore-forming). Over 313-316 (VNVR) the chain is Extracellular. A helical transmembrane segment spans residues 317–337 (EMIFIMIYVSFDMILGAYLIG). Residues 338–858 (NMTALIVKGS…GDDGGTEARQ (521 aa)) are Cytoplasmic-facing. Position 419–539 (419–539 (LFKGCSAEFI…RRILSNLSES (121 aa))) interacts with a nucleoside 3',5'-cyclic phosphate. 6 ANK repeats span residues 559 to 592 (KQEA…DPKN), 596 to 625 (DGRS…DIDL), 629 to 658 (FGNT…KLSL), 660 to 689 (NAGS…DPNA), 693 to 722 (DHRA…SVFA), and 726 to 756 (WGTT…ELSR). Residues 772–858 (RCSVFPHHPW…GDDGGTEARQ (87 aa)) form the KHA domain.

It belongs to the potassium channel family. Plant (TC 1.A.1.4) subfamily.

The protein localises to the membrane. Functionally, probable outward-rectifying potassium channel. This chain is Potassium channel KOR1, found in Oryza sativa subsp. japonica (Rice).